The following is a 1507-amino-acid chain: Chromatin-remodeling ATPase INO80 (1507 aa).

Disordered regions lie at residues 30-82 and 428-452; these read PEDE…DAED and RKKQ…KRQQ. The span at 38–67 shows a compositional bias: polar residues; it reads GSSSQDESRSTQGGVVANYSNGSKSRMNAS. In terms of domain architecture, DBINO spans 350–475; the sequence is AWINIVRRDI…SHFMQNKTDS (126 aa). Basic and acidic residues predominate over residues 428-450; that stretch reads RKKQEKEAAEAFKREQEQRESKR. The Helicase ATP-binding domain occupies 598 to 769; that stretch reads VNCYEQGLNG…WALLHFIMPM (172 aa). 611 to 618 contributes to the ATP binding site; sequence DEMGLGKT. Residues 1210–1360 form the Helicase C-terminal domain; sequence TLDILLKRLR…QLVMTGGHVQ (151 aa). The tract at residues 1415-1507 is disordered; that stretch reads LEELEDVDRQ…KGFDPSSSAN (93 aa). The segment covering 1491–1507 has biased composition (polar residues); sequence ASVTESNKGFDPSSSAN.

The protein belongs to the SNF2/RAD54 helicase family. Component of the INO80 chromatin-remodeling complex. Associates with REF6/EIN6.

It is found in the nucleus. The enzyme catalyses ATP + H2O = ADP + phosphate + H(+). Its function is as follows. ATPase component of the chromatin remodeling INO80 complex which is involved in transcriptional regulation, DNA replication and DNA repair. Binds DNA. As part of the INO80 complex, remodels chromatin by shifting nucleosomes. The INO80 complex controls ethylene-induced H2A.Z eviction dynamics. Positive regulator of homologous recombination, but not an essential component of homologous recombination. Not involved in the illegitimate repair pathway. This chain is Chromatin-remodeling ATPase INO80, found in Arabidopsis thaliana (Mouse-ear cress).